We begin with the raw amino-acid sequence, 816 residues long: Stemod-13(17)-ene synthase (816 aa).

The span at 1–10 shows a compositional bias: polar residues; that stretch reads MMLLSSSYSG. The disordered stretch occupies residues 1-24; the sequence is MMLLSSSYSGGQFPGVSPLGTRPK. 5 residues coordinate Mg(2+): aspartate 553, aspartate 557, asparagine 698, threonine 702, and glutamate 706. A DDXXD motif motif is present at residues 553–557; that stretch reads DDFFD.

This sequence belongs to the terpene synthase family. Mg(2+) is required as a cofactor.

The enzyme catalyses 9alpha-copalyl diphosphate = stemod-13(17)-ene + diphosphate. Functionally, catalyzes the conversion of syn-copalyl diphosphate to stemodene. This is Stemod-13(17)-ene synthase (KSL11) from Oryza sativa subsp. indica (Rice).